A 1004-amino-acid chain; its full sequence is Sal-like protein 2 (1004 aa).

Disordered regions lie at residues 1-33, 51-122, 137-177, 220-270, and 285-307; these read MSRRKQRRPQQLISDCEGPSASENGDASEEDHP, AHQN…EESS, GGGL…SGHL, PASP…EPPK, and PFSVGGVGRSHKPTPAPSPALPG. Residues 34–56 form a C2H2-type 1; atypical zinc finger; sequence QVCAKCCAQFSDPTEFLAHQNSC. The segment covering 71 to 81 has biased composition (low complexity); it reads NPSNSSASSAP. Residues 83 to 98 show a composition bias toward basic and acidic residues; that stretch reads PEGHSRSQVMDTEHSN. Over residues 99–110 the composition is skewed to low complexity; that stretch reads PPDSGSSGAPDP. The segment covering 151-171 has biased composition (pro residues); the sequence is PLPPESTPAPPPPPPPPPPPG. A Phosphoserine modification is found at Ser-243. 5 C2H2-type zinc fingers span residues 372-394, 400-422, 629-651, 657-679, and 689-711; these read HKCRFCAKVFGSDSALQIHLRSH, YKCNVCGNRFTTRGNLKVHFHRH, NQCVICLRVLSCPRALRLHYGQH, FKCKVCGRAFSTRGNLRAHFVGH, and NSCPICQKKFTNAVTLQQHVRMH. The interval 712–910 is disordered; the sequence is LGGQIPNGGS…PGESSGRKAC (199 aa). The segment covering 731–742 has biased composition (polar residues); sequence QENSSEQSTASG. The segment covering 756-779 has biased composition (acidic residues); it reads PEEEMSEEEEEDEEEEEDVTDEDS. Phosphoserine is present on residues Ser-794, Ser-799, and Ser-803. The span at 800–809 shows a compositional bias: acidic residues; that stretch reads EEVSGAEEEV. Over residues 810–819 the composition is skewed to low complexity; sequence ATSVAAPTTV. Basic and acidic residues predominate over residues 820 to 829; that stretch reads KEMDSNEKAP. A compositionally biased stretch (pro residues) spans 832 to 841; it reads TLPPPPPPPD. Over residues 896 to 910 the composition is skewed to basic and acidic residues; the sequence is AMKKDPGESSGRKAC. Lys-908 participates in a covalent cross-link: Glycyl lysine isopeptide (Lys-Gly) (interchain with G-Cter in ubiquitin). 2 consecutive C2H2-type zinc fingers follow at residues 908 to 930 and 937 to 961; these read KACEVCGQSFPTQTALEEHQKTH and FTCVFCRQGFLDRATLKKHMLLAHH.

Belongs to the sal C2H2-type zinc-finger protein family. Expressed throughout embryonic development. In adult predominantly in brain.

Its subcellular location is the nucleus. Functionally, probable transcription factor that plays a role in eye development before, during, and after optic fissure closure. This Mus musculus (Mouse) protein is Sal-like protein 2 (Sall2).